Consider the following 1101-residue polypeptide: Helicase POLQ-like (1101 aa).

The disordered stretch occupies residues 212–261; that stretch reads DLGDHSMKERDWKSSSHNTVNEELPHNCIEQPQQNDESSSKVRTSSDMNR. Residues 213–225 show a composition bias toward basic and acidic residues; it reads LGDHSMKERDWKS. The span at 241–258 shows a compositional bias: polar residues; sequence EQPQQNDESSSKVRTSSD. Residues 346-518 form the Helicase ATP-binding domain; sequence LNSVQERKNL…FLQAEYYTSQ (173 aa). 359 to 366 contacts ATP; sequence LPTSGGKT. The DEAH box motif lies at 463–466; sequence DELH. Residues 566 to 758 enclose the Helicase C-terminal domain; that stretch reads HLVALVTEVI…EFTKGIQTLF (193 aa).

This sequence belongs to the helicase family. SKI2 subfamily. In terms of assembly, homodimer. Interacts with POLN. Interacts with RAD51B and RAD51C; promoting association with the BCDX2 complex. Interacts with the replication protein A (RPA/RP-A) complex. Interacts with RAD51; stimulating HELQ DNA helicase activity and ability to unwing DNA.

It localises to the nucleus. The protein localises to the chromosome. It catalyses the reaction Couples ATP hydrolysis with the unwinding of duplex DNA by translocating in the 3'-5' direction.. The catalysed reaction is ATP + H2O = ADP + phosphate + H(+). ATPase activity is strongly stimulated by single-stranded DNA. Presence of ATP and Mg cofactor are required for helicase activity allowing to unwind duplex oligonucleotides up to 60-70-mer. This helicase activity is stimulated by replication protein A (RPA/RP-A) complex that binds to unwound regions and inhibits re-annealing. Single-stranded 3'-5' DNA helicase that plays a key role in homology-driven double-strand break (DSB) repair. Involved in different DSB repair mechanisms that are guided by annealing of extensive stretches of complementary bases at break ends, such as microhomology-mediated end-joining (MMEJ), single-strand annealing (SSA) or synthesis-dependent strand annealing (SDSA). Possesses both DNA unwinding and annealing activities. Forms a complex with RAD51, stimulating HELQ DNA helicase activity and ability to unwing DNA. Efficiently unwinds substrates containing 3' overhangs or a D-loop. In contrast, interaction with the replication protein A (RPA/RP-A) complex inhibits DNA unwinding by HELQ but strongly stimulates DNA strand annealing. Triggers displacement of RPA from single-stranded DNA to facilitate annealing of complementary sequences. In Homo sapiens (Human), this protein is Helicase POLQ-like.